The following is a 380-amino-acid chain: Zinc finger protein neuro-d4 (380 aa).

The interval 132 to 164 (ALLDCQKPPPGDFAHDAEGDEMEDDAPRRKNKA) is disordered. A C2H2-type zinc finger spans residues 190–213 (YVCDICGKRYKNRPGLSYHYTHTH). 2 consecutive PHD-type zinc fingers follow at residues 262-321 (EGPC…CKNC) and 318-368 (CKNC…CLRQ). Zn(2+) contacts are provided by C265, C268, C286, C289, H294, C297, C315, C318, C321, C324, C336, C339, H344, C347, C362, and C365.

It belongs to the requiem/DPF family. In terms of assembly, component of neuron-specific chromatin remodeling complex (nBAF complex), a subfamily of ATP-dependent SWI/SNF chromatin remodeling complexes.

It localises to the cytoplasm. It is found in the nucleus. Functionally, may have an important role in developing neurons by participating in regulation of cell survival, possibly as a neurospecific transcription factor. Belongs to the neuron-specific chromatin remodeling complex (nBAF complex) and plays a role in neural development. The sequence is that of Zinc finger protein neuro-d4 from Gallus gallus (Chicken).